Here is a 750-residue protein sequence, read N- to C-terminus: Coiled-coil domain-containing protein 142 (750 aa).

The segment at 1-29 is disordered; sequence MAQASRSGSLPPLVIVPPLRAQPGGTGEE. Positions 87–110 form a coiled coil; that stretch reads ALQRLRAVLLRLHREREQLLQARD. The tract at residues 687–714 is disordered; sequence LEPPLQPGTSPAQTGQLQSTLGGRGPSP. Over residues 693-707 the composition is skewed to polar residues; the sequence is PGTSPAQTGQLQSTL.

This is Coiled-coil domain-containing protein 142 (CCDC142) from Homo sapiens (Human).